The following is a 308-amino-acid chain: Probable inositol oxygenase (308 aa).

Substrate is bound by residues Arg49 and 106-108 (DDS). Fe cation-binding residues include His119, His144, and Asp145. Substrate-binding positions include Lys148 and 165 to 166 (GD). Fe cation-binding residues include His217, His243, and Asp276. Residue 243-244 (HS) coordinates substrate.

This sequence belongs to the myo-inositol oxygenase family. Fe cation is required as a cofactor.

It localises to the cytoplasm. It catalyses the reaction myo-inositol + O2 = D-glucuronate + H2O + H(+). It participates in polyol metabolism; myo-inositol degradation into D-glucuronate; D-glucuronate from myo-inositol: step 1/1. Its function is as follows. Involved in the biosynthesis of UDP-glucuronic acid (UDP-GlcA), providing nucleotide sugars for cell-wall polymers. May be also involved in plant ascorbate biosynthesis. In Oryza sativa subsp. japonica (Rice), this protein is Probable inositol oxygenase.